The primary structure comprises 261 residues: Glucose 1-dehydrogenase 2 (261 aa).

11 to 35 (VVTGGSKGLGRAMAVRFGQEQSKVV) lines the NADP(+) pocket. Ser145 provides a ligand contact to substrate. Tyr158 (proton acceptor) is an active-site residue.

This sequence belongs to the short-chain dehydrogenases/reductases (SDR) family. As to quaternary structure, homotetramer.

It catalyses the reaction D-glucose + NAD(+) = D-glucono-1,5-lactone + NADH + H(+). The enzyme catalyses D-glucose + NADP(+) = D-glucono-1,5-lactone + NADPH + H(+). This Priestia megaterium (Bacillus megaterium) protein is Glucose 1-dehydrogenase 2 (gdhII).